Reading from the N-terminus, the 208-residue chain is Large ribosomal subunit protein uL4 (208 aa).

Positions 45-89 (RQGTHAHKNRSAVSGGGKKPWRQKGTGRARQGSTRSPQWRGGGTV) are disordered.

The protein belongs to the universal ribosomal protein uL4 family. In terms of assembly, part of the 50S ribosomal subunit.

One of the primary rRNA binding proteins, this protein initially binds near the 5'-end of the 23S rRNA. It is important during the early stages of 50S assembly. It makes multiple contacts with different domains of the 23S rRNA in the assembled 50S subunit and ribosome. Its function is as follows. Forms part of the polypeptide exit tunnel. The polypeptide is Large ribosomal subunit protein uL4 (Lactococcus lactis subsp. cremoris (strain MG1363)).